We begin with the raw amino-acid sequence, 240 residues long: uncharacterized protein (240 aa).

A helical transmembrane segment spans residues L73–F93.

It belongs to the universal ribosomal protein uS3 family.

It localises to the mitochondrion membrane. This is an uncharacterized protein from Arabidopsis thaliana (Mouse-ear cress).